The chain runs to 93 residues: Small ribosomal subunit protein uS19 (93 aa).

This sequence belongs to the universal ribosomal protein uS19 family.

Protein S19 forms a complex with S13 that binds strongly to the 16S ribosomal RNA. The chain is Small ribosomal subunit protein uS19 from Ehrlichia chaffeensis (strain ATCC CRL-10679 / Arkansas).